Consider the following 287-residue polypeptide: MSSWLDKFVPSIVRSESKRSAGSVPEGLWKKCPKCENVLYRPELEKNLDVCPKCSHHLRVSARRRLDIFLDKEGRHEIAAHLEPEDKLKFKDSKRYKDRLADAQKATGEKDALVAMQGALNGMPVVAVAFEFSFLGGSMGAIVGERFIQAVNVCLEKRIPLVCFSASGGARMQEALISLMQMAKTSAGLERLKQEGIPYISVMTDPVFGGVSASLAMLGDLNVAEPNALIGFAGPRVIEQTVREKLPEGFQRSEFLLEKGALDMIIKRDEMRNRLYNILSLLTNKVA.

In terms of domain architecture, CoA carboxyltransferase N-terminal spans 28 to 287; sequence LWKKCPKCEN…ILSLLTNKVA (260 aa). 4 residues coordinate Zn(2+): C32, C35, C51, and C54. The segment at 32–54 adopts a C4-type zinc-finger fold; the sequence is CPKCENVLYRPELEKNLDVCPKC.

It belongs to the AccD/PCCB family. In terms of assembly, acetyl-CoA carboxylase is a heterohexamer composed of biotin carboxyl carrier protein (AccB), biotin carboxylase (AccC) and two subunits each of ACCase subunit alpha (AccA) and ACCase subunit beta (AccD). Zn(2+) is required as a cofactor.

The protein localises to the cytoplasm. The enzyme catalyses N(6)-carboxybiotinyl-L-lysyl-[protein] + acetyl-CoA = N(6)-biotinyl-L-lysyl-[protein] + malonyl-CoA. It participates in lipid metabolism; malonyl-CoA biosynthesis; malonyl-CoA from acetyl-CoA: step 1/1. Functionally, component of the acetyl coenzyme A carboxylase (ACC) complex. Biotin carboxylase (BC) catalyzes the carboxylation of biotin on its carrier protein (BCCP) and then the CO(2) group is transferred by the transcarboxylase to acetyl-CoA to form malonyl-CoA. The chain is Acetyl-coenzyme A carboxylase carboxyl transferase subunit beta from Marinomonas sp. (strain MWYL1).